Here is a 176-residue protein sequence, read N- to C-terminus: ATP-dependent protease subunit HslV (176 aa).

The active site involves threonine 2. 3 residues coordinate Na(+): alanine 157, cysteine 160, and threonine 163.

It belongs to the peptidase T1B family. HslV subfamily. A double ring-shaped homohexamer of HslV is capped on each side by a ring-shaped HslU homohexamer. The assembly of the HslU/HslV complex is dependent on binding of ATP.

It is found in the cytoplasm. The catalysed reaction is ATP-dependent cleavage of peptide bonds with broad specificity.. Allosterically activated by HslU binding. Functionally, protease subunit of a proteasome-like degradation complex believed to be a general protein degrading machinery. This is ATP-dependent protease subunit HslV from Buchnera aphidicola subsp. Acyrthosiphon pisum (strain APS) (Acyrthosiphon pisum symbiotic bacterium).